Consider the following 157-residue polypeptide: MAEQTEKAFQKQVGVTGCFKSKEKKAPGKSGHRFFKNVGLNFKTPKEAIDGNYVDKKCPFTGNVSIRGRILTGVVKSSKMMRTIIVRRDYLHFIPKYARYEKRHTNIPAHVSPCFRVRDGDTVIIGQCRPLSKTIRFNVLRVIPQAGATGKKSFSGF.

Belongs to the universal ribosomal protein uS17 family.

The protein is Small ribosomal subunit protein uS17 (RPS11) of Dunaliella tertiolecta (Green alga).